Consider the following 198-residue polypeptide: Large ribosomal subunit protein bL25 (198 aa).

This sequence belongs to the bacterial ribosomal protein bL25 family. CTC subfamily. In terms of assembly, part of the 50S ribosomal subunit; part of the 5S rRNA/L5/L18/L25 subcomplex. Contacts the 5S rRNA. Binds to the 5S rRNA independently of L5 and L18.

This is one of the proteins that binds to the 5S RNA in the ribosome where it forms part of the central protuberance. The protein is Large ribosomal subunit protein bL25 of Phocaeicola vulgatus (strain ATCC 8482 / DSM 1447 / JCM 5826 / CCUG 4940 / NBRC 14291 / NCTC 11154) (Bacteroides vulgatus).